A 308-amino-acid polypeptide reads, in one-letter code: Olfactory receptor 5H8 (308 aa).

At 1-28 the chain is on the extracellular side; that stretch reads MDDENATLLTEFVLTGLTYQSEWKIPLF. A helical membrane pass occupies residues 29–49; sequence LAFLVIYLITIMANLGLIAVI. The Cytoplasmic portion of the chain corresponds to 50–56; the sequence is WKDSHLH. The helical transmembrane segment at 57–77 threads the bilayer; that stretch reads IPMYLFLGSLAFVDAWLSSSV. The Extracellular portion of the chain corresponds to 78-98; sequence TPKMLISFLAKSMIISVSECK. A disulfide bridge links cysteine 97 with cysteine 179. The helical transmembrane segment at 99 to 119 threads the bilayer; the sequence is IQFFSFGISGTTECFLLATMA. Over 120–133 the chain is Cytoplasmic; sequence YDRYVAICKPLLYP. Residues 134-154 traverse the membrane as a helical segment; sequence VIMTNGLCIWLLVLSFIGGFL. Topologically, residues 155–195 are extracellular; it reads HALIHEGILFRLTFCNSNIIHHFYCDIIPLLKISCTDPSIN. The chain crosses the membrane as a helical span at residues 196 to 216; sequence FLMLFILSGSIQVFTILTVLV. At 217-238 the chain is on the cytoplasmic side; sequence SYTFVLFTILKKKAKDIRKAFS. Residues 239-259 traverse the membrane as a helical segment; that stretch reads TCGAHLLSVSLYYGPLLFMYV. Residues 260–270 lie on the Extracellular side of the membrane; the sequence is HPASPQADDQD. The helical transmembrane segment at 271–291 threads the bilayer; that stretch reads MVESLFYTVIIPFLNPIIYSL. Topologically, residues 292 to 308 are cytoplasmic; it reads RNKQVIDSLTKTLKGNV.

The protein belongs to the G-protein coupled receptor 1 family.

It is found in the cell membrane. Odorant receptor. This Homo sapiens (Human) protein is Olfactory receptor 5H8.